The following is a 729-amino-acid chain: Polyribonucleotide nucleotidyltransferase (729 aa).

Positions 510 and 516 each coordinate Mg(2+). Residues Pro-576–Ile-635 form the KH domain. One can recognise an S1 motif domain in the interval Gly-647 to Ser-719.

It belongs to the polyribonucleotide nucleotidyltransferase family. Requires Mg(2+) as cofactor.

The protein localises to the cytoplasm. The catalysed reaction is RNA(n+1) + phosphate = RNA(n) + a ribonucleoside 5'-diphosphate. In terms of biological role, involved in mRNA degradation. Catalyzes the phosphorolysis of single-stranded polyribonucleotides processively in the 3'- to 5'-direction. This is Polyribonucleotide nucleotidyltransferase from Frankia alni (strain DSM 45986 / CECT 9034 / ACN14a).